Here is a 317-residue protein sequence, read N- to C-terminus: HTH-type transcriptional regulator MetR (317 aa).

An HTH lysR-type domain is found at 1–59 (MIEVKHLKTLQALRNCGSLAAAAATLHQTQSALSHQFSDLEQRLGFRLFVRKSQPLRFT). The H-T-H motif DNA-binding region spans 19–38 (LAAAAATLHQTQSALSHQFS).

The protein belongs to the LysR transcriptional regulatory family.

It is found in the cytoplasm. Functionally, control of the last step in methionine biosynthesis; MetR is a positive activator of the metA, metE and metH genes. It is also a negative regulator of its own expression. This is HTH-type transcriptional regulator MetR (metR) from Escherichia coli O157:H7.